The primary structure comprises 112 residues: Small ribosomal subunit protein bS16 (112 aa).

Belongs to the bacterial ribosomal protein bS16 family.

The chain is Small ribosomal subunit protein bS16 from Karelsulcia muelleri (strain GWSS) (Sulcia muelleri).